A 117-amino-acid chain; its full sequence is MTRVKRGVVARRRHKKILKQAKGYYGARSRVFRVAKQAVIKAGQYAYRDRRQRKRQFRALWITRINAASRANGLSYSRFIAGLKKSGIEIDRKVLADLAVHEKAAFAAIVDKAKAAQ.

This sequence belongs to the bacterial ribosomal protein bL20 family.

Binds directly to 23S ribosomal RNA and is necessary for the in vitro assembly process of the 50S ribosomal subunit. It is not involved in the protein synthesizing functions of that subunit. The protein is Large ribosomal subunit protein bL20 of Chromohalobacter salexigens (strain ATCC BAA-138 / DSM 3043 / CIP 106854 / NCIMB 13768 / 1H11).